Reading from the N-terminus, the 582-residue chain is Insulin-like growth factor 2 mRNA-binding protein 3 (582 aa).

2 consecutive RRM domains span residues 2–75 (NKLY…HSVP) and 81–156 (CKLQ…YIPD). The segment at 164–190 (PAVGGRRGFNPRGPPRQGSPSLGARPK) is disordered. Ser-182 is subject to Phosphoserine. 4 KH domains span residues 194–259 (DVPL…CRNI), 275–342 (EIPL…EEEI), 408–473 (SETV…QGRI), and 490–556 (KLEA…QRKI). Residues 562 to 582 (QVRRQQQPKPSAAGPPVARRK) form a disordered region.

Belongs to the RRM IMP/VICKZ family. Homodimer and multimer.

Its subcellular location is the cytoplasm. It localises to the nucleus. The protein resides in the P-body. It is found in the stress granule. In terms of biological role, RNA-binding factor that may recruit target transcripts to cytoplasmic protein-RNA complexes (mRNPs). This transcript 'caging' into mRNPs allows mRNA transport and transient storage. It also modulates the rate and location at which target transcripts encounter the translational apparatus and shields them from endonuclease attacks or microRNA-mediated degradation. Preferentially binds to N6-methyladenosine (m6A)-containing mRNAs and increases their stability. Involved in neuronal crest migration. The protein is Insulin-like growth factor 2 mRNA-binding protein 3 (igf2bp3) of Danio rerio (Zebrafish).